Consider the following 556-residue polypeptide: Polypeptide N-acetylgalactosaminyltransferase 13 (556 aa).

Topologically, residues 1 to 4 (MRRF) are cytoplasmic. Residues 5-27 (VYCKVVLATSLMWVLVDVFLLLY) traverse the membrane as a helical; Signal-anchor for type II membrane protein segment. The Lumenal portion of the chain corresponds to 28–556 (FSECNKCDDK…WLLRNMTLGT (529 aa)). N-linked (GlcNAc...) asparagine glycosylation is found at Asn-94 and Asn-116. 5 cysteine pairs are disulfide-bonded: Cys-105/Cys-338, Cys-329/Cys-407, Cys-441/Cys-458, Cys-481/Cys-496, and Cys-522/Cys-539. Residues 114-224 (LPNTSVVIVF…LGWLEPLLAR (111 aa)) are catalytic subdomain A. Positions 155 and 185 each coordinate substrate. Positions 208 and 210 each coordinate Mn(2+). The catalytic subdomain B stretch occupies residues 284–346 (PVRTPTMAGG…TCSHVGHVFR (63 aa)). Trp-315 provides a ligand contact to substrate. His-343 provides a ligand contact to Mn(2+). Substrate is bound by residues Arg-346 and Tyr-351. Residues 428-550 (YSLGEIRNVE…GSRSQQWLLR (123 aa)) enclose the Ricin B-type lectin domain. An N-linked (GlcNAc...) asparagine glycan is attached at Asn-551.

This sequence belongs to the glycosyltransferase 2 family. GalNAc-T subfamily. The cofactor is Mn(2+). In terms of tissue distribution, specifically expressed in neuronal cells. Expressed in fetal brain, whole adult brain, cerebral cortex and cerebellum. Not expressed in other tissues tested.

It is found in the golgi apparatus membrane. The enzyme catalyses L-seryl-[protein] + UDP-N-acetyl-alpha-D-galactosamine = a 3-O-[N-acetyl-alpha-D-galactosaminyl]-L-seryl-[protein] + UDP + H(+). It catalyses the reaction L-threonyl-[protein] + UDP-N-acetyl-alpha-D-galactosamine = a 3-O-[N-acetyl-alpha-D-galactosaminyl]-L-threonyl-[protein] + UDP + H(+). It participates in protein modification; protein glycosylation. Functionally, catalyzes the initial reaction in O-linked oligosaccharide biosynthesis, the transfer of an N-acetyl-D-galactosamine (GalNAc) residue from UDP-GalNAc to a serine or threonine residue on the protein receptor. Generates GalNAc-O-Ser/Thr structure also known as Tn antigen, which itself is immunogenic but also serves as a precursor for the synthesis of different mucin-type O-glycan core structures. Contributes to the synthesis of O-linked glycans on mucins and proteoglycans of the central nervous system. May promote neurogenesis through glycosylation and stabilization of PDPN. Its function is as follows. Can glycosylate both unmodified peptides and glycopeptides that already contain an O-linked GalNAc sugar. Transfers GalNAc to Thr-/Ser-rich tandem repeats GTTPSPVPTTSTTSAP of MUC5AC, specifically on Thr-3 of non-glycosylated MUC5AC peptide, on Thr-12 and Thr-13 of preglycosylated MUC5AC at Thr-3 (MUC5AC-3), on Thr-3 of preglycosylated MUC5AC at Thr-13 (MUC5AC-13) and on Thr-12 of preglycosylated MUC5AC at Thr-3 and Thr-13 (MUC5AC-3,13). Transfers GalNAc to three consecutive serine/threonine residues on SDC3 forming a triplet-Tn epitope expressed in Purkinje cells of the developing brain. In terms of biological role, can glycosylate both unmodified peptides and glycopeptides that already contain an O-linked GalNAc sugar. Transfers GalNAc to Thr-/Ser-rich tandem repeats GTTPSPVPTTSTTSAP of MUC5AC, specifically on Thr-3 of non-glycosylated MUC5AC peptide, on Thr-12 and Thr-13 of preglycosylated MUC5AC at Thr-3 (MUC5AC-3), on Thr-3 of preglycosylated MUC5AC at Thr-13 (MUC5AC-13) and on Thr-12 of preglycosylated MUC5AC at Thr-3 and Thr-13 (MUC5AC-3,13). This is Polypeptide N-acetylgalactosaminyltransferase 13 (GALNT13) from Homo sapiens (Human).